The following is a 555-amino-acid chain: AP2-like ethylene-responsive transcription factor ANT (555 aa).

2 disordered regions span residues 34-56 (GGREAIYSSSTSSAATSSSSVPP) and 199-231 (LSMSPGSQSSCITGSHHHQQNQNQNHQSQNHQQ). Composition is skewed to low complexity over residues 41–53 (SSSTSSAATSSSS), 199–208 (LSMSPGSQSS), and 218–231 (QNQNQNHQSQNHQQ). 2 DNA-binding regions (AP2/ERF) span residues 283–349 (QYRG…TNFS) and 385–443 (IYRG…TNFD).

Belongs to the AP2/ERF transcription factor family. AP2 subfamily. In terms of assembly, interacts with ANL2, HDG2 and HDG10, and possibly with GL2, HDG3, HDG8, ATML1 and PDF2. As to expression, mostly expressed in developing flowers. Also present in mature flowers, siliques and seedlings, but not in mature roots, leaves and stems. Expressed in ovules and in vegetative and floral primordia.

Its subcellular location is the nucleus. In terms of biological role, transcription activator that recognizes and binds to the DNA consensus sequence 5'-CAC[AG]N[AT]TNCCNANG-3'. Required for the initiation and growth of ovules integumenta, and for the development of female gametophyte. Plays a critical role in the development of gynoecium marginal tissues (e.g. stigma, style and septa), and in the fusion of carpels and of medial ridges leading to ovule primordia. Also involved in organs initiation and development, including floral organs. Maintains the meristematic competence of cells and consequently sustains expression of cell cycle regulators during organogenesis, thus controlling the final size of each organ by controlling their cell number. Regulates INO autoinduction and expression pattern. As ANT promotes petal cell identity and mediates down-regulation of AG in flower whorl 2, it functions as a class A homeotic gene. In Arabidopsis thaliana (Mouse-ear cress), this protein is AP2-like ethylene-responsive transcription factor ANT.